The sequence spans 532 residues: Type 2 DNA topoisomerase 6 subunit B (532 aa).

Residues asparagine 41, aspartate 75, 96 to 97, 105 to 112, and lysine 427 contribute to the ATP site; these read SK and GMYGLGVK.

It belongs to the TOP6B family. In terms of assembly, homodimer. Heterotetramer of two Top6A and two Top6B chains.

It carries out the reaction ATP-dependent breakage, passage and rejoining of double-stranded DNA.. Relaxes both positive and negative superturns and exhibits a strong decatenase activity. The polypeptide is Type 2 DNA topoisomerase 6 subunit B (Sulfurisphaera tokodaii (strain DSM 16993 / JCM 10545 / NBRC 100140 / 7) (Sulfolobus tokodaii)).